The following is a 258-amino-acid chain: Cyclohexa-1,5-dienecarbonyl-CoA hydratase (258 aa).

It belongs to the enoyl-CoA hydratase/isomerase family.

The enzyme catalyses cyclohexa-1,5-diene-1-carbonyl-CoA + H2O = 6-hydroxycyclohex-1-ene-1-carbonyl-CoA. It functions in the pathway aromatic compound metabolism; benzoyl-CoA degradation. Its function is as follows. Catalyzes the hydration of cyclohexa-1,5-diene-1-carboxyl-CoA. This is Cyclohexa-1,5-dienecarbonyl-CoA hydratase (dch) from Thauera aromatica.